A 299-amino-acid polypeptide reads, in one-letter code: Peroxisomal biogenesis factor 19 (299 aa).

Residue Ala-2 is modified to N-acetylalanine. Positions 2-56 (AAAEGGCGAGVEADRELEELLESALDDFDKAKPSPAPSPTISAPDASGPQKRSPG) are docking to the peroxisome membrane and binding to PEX3. Positions 2 to 91 (AAAEGGCGAG…QATAEFEKAM (90 aa)) are necessary for PEX19 function on peroxisome biogenesis. The tract at residues 25 to 63 (ALDDFDKAKPSPAPSPTISAPDASGPQKRSPGDTAKDAL) is disordered. 4 positions are modified to phosphoserine: Ser-35, Ser-39, Ser-54, and Ser-66. Thr-236 is subject to Phosphothreonine. At Cys-296 the chain carries Cysteine methyl ester. The S-farnesyl cysteine moiety is linked to residue Cys-296. The propeptide at 297–299 (LIM) is removed in mature form.

Belongs to the peroxin-19 family. In terms of assembly, interacts with a broad range of peroxisomal membrane proteins, including PEX3, PEX10, PEX11A, PEX11B, PEX12, PEX13, PEX14 and PEX16, PXMP2/PMP22, PXMP4/PMP24, SLC25A17/PMP34, ABCD1/ALDP, ABCD2/ALDRP, and ABCD3/PMP70. Also interacts with the tumor suppressor CDKN2A/p19ARF.

It localises to the cytoplasm. The protein resides in the peroxisome membrane. Its function is as follows. Necessary for early peroxisomal biogenesis. Acts both as a cytosolic chaperone and as an import receptor for peroxisomal membrane proteins (PMPs). Binds and stabilizes newly synthesized PMPs in the cytoplasm by interacting with their hydrophobic membrane-spanning domains, and targets them to the peroxisome membrane by binding to the integral membrane protein PEX3. Excludes CDKN2A from the nucleus and prevents its interaction with MDM2, which results in active degradation of TP53. This chain is Peroxisomal biogenesis factor 19 (Pex19), found in Rattus norvegicus (Rat).